The primary structure comprises 516 residues: Maturase K (516 aa).

It belongs to the intron maturase 2 family. MatK subfamily.

The protein localises to the plastid. It is found in the chloroplast. In terms of biological role, usually encoded in the trnK tRNA gene intron. Probably assists in splicing its own and other chloroplast group II introns. This is Maturase K from Chara globularis (Fragile stonewort).